Reading from the N-terminus, the 140-residue chain is NTF2-related export protein 1 (140 aa).

Residue Ala2 is modified to N-acetylalanine. One can recognise an NTF2 domain in the interval 16–135; that stretch reads AAEEFVNVYY…WKIASDCFRF (120 aa).

Heterodimer with NXF1. Forms a complex with RANGAP1, RANBP2/NUP358 and NXF1. Interacts (via NTF2 domain) with NXF1. Stabilizes the NTF2 domain of NXF1 by heterodimerization. The formation of NXF1-NXT1 heterodimers is required for the NXF1-mediated nuclear mRNA export. Preferentially binds Ran-GTP. Associates with NXF2, NXF3 and NXF5. Does not bind nucleoporins (NPC) directly, its association to NPC is mediated by NXF1.

Its subcellular location is the nucleus. It is found in the nucleus speckle. It localises to the cytoplasm. In terms of biological role, stimulator of protein export for NES-containing proteins. Also plays a role in the nuclear export of U1 snRNA, tRNA, and mRNA. The NXF1-NXT1 heterodimer is involved in the export of HSP70 mRNA in conjunction with ALYREF/THOC4 and THOC5. This is NTF2-related export protein 1 (NXT1) from Bos taurus (Bovine).